We begin with the raw amino-acid sequence, 455 residues long: MTTMTTAAAKAAEPTRTTAIASLHLLAELEGHSSRAWHLAWNPRMPILASCSGDKDVRLHAYSFVSTTSAQGASTCKHPSFNLREVIPTGHQRTVRQVAWSPDGKILATASFDSTVGIWERIQDIDGSSELQGNTDASGPVVLSNGGAHVDEPEWDCVGTLEGHESECKSVAFSYTGGVLASCSRDKSVWIWEVQPDAEFECLSVLMEHSQDVKVVAWHPNDEVLASASYDDAIKLYIDDPSDDWFCYTTLTGHESTVWSISFSPCGNYLASASDDLTVRIWRRLDADQCEAHGLRPEGKMAGRRGEKWIAVNILNGYHDRTVYSVSWGVDKTSTRPGNLGRIASGGGDGRICVYEVTASDDEKSLQPKVELIAKMERAHASADVNCVSWAPESLNARGGTTAKIEQLTDEGETLNKGGQHASHELMSDMLASAGDDGSVKVWTLASSAYAATSK.

7 WD repeats span residues 31–70, 90–129, 163–202, 208–247, 253–292, 318–365, and 380–453; these read GHSS…TTSA, GHQR…DGSS, GHES…EFEC, EHSQ…DWFC, GHES…QCEA, YHDR…DEKS, and HASA…YAAT.

This sequence belongs to the WD repeat CIA1 family.

Essential component of the cytosolic iron-sulfur (Fe/S) protein assembly machinery. Required for the maturation of extramitochondrial Fe/S proteins. This chain is Probable cytosolic iron-sulfur protein assembly protein 1, found in Mycosarcoma maydis (Corn smut fungus).